Reading from the N-terminus, the 127-residue chain is Insulin-like growth factor 3.L (127 aa).

A signal peptide spans Met-1–Ala-49. The tract at residues Ala-49–Val-80 is b. 3 cysteine pairs are disulfide-bonded: Cys-61/Cys-99, Cys-73/Cys-112, and Cys-98/Cys-103. The segment at Ser-81–Pro-92 is c. The a stretch occupies residues Gly-93–Ala-113. Residues Ala-114–Gly-121 are d. Residues Arg-122 to Ser-127 constitute a propeptide, e peptide.

Belongs to the insulin family.

Its subcellular location is the secreted. Functionally, the insulin-like growth factors, isolated from plasma, are structurally and functionally related to insulin but have a much higher growth-promoting activity. Promotes anterior neural development. This Xenopus laevis (African clawed frog) protein is Insulin-like growth factor 3.L.